The sequence spans 827 residues: Rho GTPase-activating protein 6 (827 aa).

One can recognise a PH domain in the interval 18-125 (TVYKSGPLFI…WKAALEQALA (108 aa)). The Rho-GAP domain maps to 172 to 371 (LALEEIDGSP…ALLEDYGNMI (200 aa)). Disordered regions lie at residues 379–437 (CSTS…SDYA) and 517–561 (YTTS…SSGN). Positions 401-412 (IVVKHPDLHTLD) are enriched in basic and acidic residues. Residues 413–423 (IEEGETDDDND) are compositionally biased toward acidic residues. Over residues 517 to 543 (YTTSAEKPASKTTGSSTVNSKRSSSWG) the composition is skewed to polar residues. Residues 560 to 684 (GNDELLIQRL…HQLSQQRQHH (125 aa)) adopt a coiled-coil conformation.

Acts as a GTPase activator for the Rac-type GTPase by converting it to an inactive GDP-bound state. This is Rho GTPase-activating protein 6 (ROPGAP6) from Arabidopsis thaliana (Mouse-ear cress).